The sequence spans 208 residues: 3-demethoxyubiquinol 3-hydroxylase (208 aa).

The Fe cation site is built by glutamate 57, glutamate 87, histidine 90, glutamate 139, glutamate 171, and histidine 174.

It belongs to the COQ7 family. It depends on Fe cation as a cofactor.

It is found in the cell membrane. The catalysed reaction is a 5-methoxy-2-methyl-3-(all-trans-polyprenyl)benzene-1,4-diol + AH2 + O2 = a 3-demethylubiquinol + A + H2O. It participates in cofactor biosynthesis; ubiquinone biosynthesis. Its function is as follows. Catalyzes the hydroxylation of 2-nonaprenyl-3-methyl-6-methoxy-1,4-benzoquinol during ubiquinone biosynthesis. The chain is 3-demethoxyubiquinol 3-hydroxylase from Burkholderia pseudomallei (strain 668).